Reading from the N-terminus, the 624-residue chain is Alpha-galactosidase 3 (624 aa).

The signal sequence occupies residues 1–22 (MSPSAAVLIPLAAAVLLRPVVG). 5 N-linked (GlcNAc...) asparagine glycosylation sites follow: Asn-37, Asn-56, Asn-197, Asn-259, and Asn-293. Asp-347 acts as the Nucleophile in catalysis. N-linked (GlcNAc...) asparagine glycosylation is present at Asn-393. Asp-412 acts as the Proton donor in catalysis. A glycan (N-linked (GlcNAc...) asparagine) is linked at Asn-469.

This sequence belongs to the glycosyl hydrolase 27 family.

The protein resides in the secreted. It carries out the reaction Hydrolysis of terminal, non-reducing alpha-D-galactose residues in alpha-D-galactosides, including galactose oligosaccharides, galactomannans and galactolipids.. Its function is as follows. Alpha-galactosidase involved in the degradation of simple oligosaccharides like melibiose, raffinose and stachyose, and of polymeric galacto(gluco)mannans. The polypeptide is Alpha-galactosidase 3 (agl3) (Hypocrea jecorina (Trichoderma reesei)).